We begin with the raw amino-acid sequence, 426 residues long: Serine--tRNA ligase (426 aa).

233–235 (TSE) is a binding site for L-serine. 264–266 (RAE) is a binding site for ATP. An L-serine-binding site is contributed by glutamate 287. Position 351-354 (351-354 (EISS)) interacts with ATP. Serine 387 contacts L-serine.

Belongs to the class-II aminoacyl-tRNA synthetase family. Type-1 seryl-tRNA synthetase subfamily. In terms of assembly, homodimer. The tRNA molecule binds across the dimer.

Its subcellular location is the cytoplasm. It catalyses the reaction tRNA(Ser) + L-serine + ATP = L-seryl-tRNA(Ser) + AMP + diphosphate + H(+). It carries out the reaction tRNA(Sec) + L-serine + ATP = L-seryl-tRNA(Sec) + AMP + diphosphate + H(+). It participates in aminoacyl-tRNA biosynthesis; selenocysteinyl-tRNA(Sec) biosynthesis; L-seryl-tRNA(Sec) from L-serine and tRNA(Sec): step 1/1. Catalyzes the attachment of serine to tRNA(Ser). Is also able to aminoacylate tRNA(Sec) with serine, to form the misacylated tRNA L-seryl-tRNA(Sec), which will be further converted into selenocysteinyl-tRNA(Sec). The sequence is that of Serine--tRNA ligase from Xanthomonas euvesicatoria pv. vesicatoria (strain 85-10) (Xanthomonas campestris pv. vesicatoria).